Here is a 326-residue protein sequence, read N- to C-terminus: Malate dehydrogenase (326 aa).

12–18 (GGTGQIA) is an NAD(+) binding site. R93 and R99 together coordinate substrate. NAD(+)-binding positions include N106, Q113, and 130–132 (VGN). Residues N132 and R163 each coordinate substrate. H188 acts as the Proton acceptor in catalysis.

It belongs to the LDH/MDH superfamily. MDH type 2 family.

It carries out the reaction (S)-malate + NAD(+) = oxaloacetate + NADH + H(+). Its function is as follows. Catalyzes the reversible oxidation of malate to oxaloacetate. This is Malate dehydrogenase from Chlamydia trachomatis serovar D (strain ATCC VR-885 / DSM 19411 / UW-3/Cx).